The chain runs to 469 residues: 3-isopropylmalate dehydratase large subunit (469 aa).

Residues C347, C410, and C413 each coordinate [4Fe-4S] cluster.

This sequence belongs to the aconitase/IPM isomerase family. LeuC type 1 subfamily. In terms of assembly, heterodimer of LeuC and LeuD. [4Fe-4S] cluster is required as a cofactor.

The catalysed reaction is (2R,3S)-3-isopropylmalate = (2S)-2-isopropylmalate. It participates in amino-acid biosynthesis; L-leucine biosynthesis; L-leucine from 3-methyl-2-oxobutanoate: step 2/4. Its function is as follows. Catalyzes the isomerization between 2-isopropylmalate and 3-isopropylmalate, via the formation of 2-isopropylmaleate. This is 3-isopropylmalate dehydratase large subunit from Polynucleobacter necessarius subsp. necessarius (strain STIR1).